Reading from the N-terminus, the 620-residue chain is Probable potassium transport system protein Kup 2 (620 aa).

A run of 12 helical transmembrane segments spans residues 10–30 (LLVSAVGVVFGDIGTSPLYAL), 50–70 (VLSLVFWTVMLLVTVKYVIVI), 102–122 (MMLGVIAAALFYGDSMITPAI), 136–156 (PDLRPYVVPITAVVLTALFAI), 168–188 (FGPVMCLWFITLAVLGIVNVI), 211–231 (LMSFYALGSVVLAVTGGEALY), 246–266 (WFCLVLPALLLNYFGQGALLI), 284–304 (MVVPLVALATFAAVIASQAVI), 336–356 (IYVPFTNWTLYLAVMALVVGF), 368–388 (IAVTSTMMIDTILVSFVMALL), 393–413 (MALVITVVGTLLAVDIAFFSA), and 415–435 (IIKVAQGGWFPLFIGFISFTV).

The protein belongs to the HAK/KUP transporter (TC 2.A.72) family.

Its subcellular location is the cell inner membrane. It carries out the reaction K(+)(in) + H(+)(in) = K(+)(out) + H(+)(out). Transport of potassium into the cell. Likely operates as a K(+):H(+) symporter. This is Probable potassium transport system protein Kup 2 from Rhodopseudomonas palustris (strain BisB5).